Consider the following 711-residue polypeptide: Choline transporter-like protein 2 (711 aa).

Residues 1 to 33 (MGDERPHYYGKHGTPQKYDPTFKGPIYNRGCTD) lie on the Cytoplasmic side of the membrane. Phosphothreonine is present on T14. A helical membrane pass occupies residues 34–54 (VICCVFLLVAIVGYVAVGIIA). The Extracellular portion of the chain corresponds to 55–232 (WTHGDPRKVI…RIFEDYTVSW (178 aa)). N187 and N200 each carry an N-linked (GlcNAc...) asparagine glycan. The helical transmembrane segment at 233–253 (YWIIIGLVIAMAMSLLFIILL) threads the bilayer. At 254–256 (RFL) the chain is on the cytoplasmic side. A helical membrane pass occupies residues 257-277 (AGIMVWVMIIMVILVLGYGIF). Over 278–315 (HCYMEYSRLRGEAGSDVSLVDLGFQTDFRVYLHLRQTW) the chain is Extracellular. A helical transmembrane segment spans residues 316-336 (LAFMIILSILEVIIILLLIFL). At 337–364 (RKRILIAIALIKEASRAVGYVMCTMLYP) the chain is on the cytoplasmic side. A helical membrane pass occupies residues 365 to 385 (LVTFFLLCLCIAYWASTAVFL). The Extracellular segment spans residues 386–440 (STSNEAVYKIFDDGLCPFTAKTCNPETFPSSNESRQCPNARCQFAFYGGESGYHR). A glycan (N-linked (GlcNAc...) asparagine) is linked at N417. Residues 441–461 (ALLGLQIFNAFMFFWLANFVL) traverse the membrane as a helical segment. Topologically, residues 462-504 (ALGQVTLAGAFASYYWALRKPDDLPAFPLFSAFGRALRYHTGS) are cytoplasmic. The helical transmembrane segment at 505-525 (LAFGALILAIVQIIRVILEYL) threads the bilayer. At 526–563 (DQRLKAAENKFAKCLMTCLKCCFWCLEKFIKFLNRNAY) the chain is on the extracellular side. The helical transmembrane segment at 564-584 (IMIAIYGTNFCTSARNAFFLL) threads the bilayer. Topologically, residues 585–599 (MRNIIRVAVLDKVTD) are cytoplasmic. A helical membrane pass occupies residues 600-620 (FLFLLGKLLIVGSVGILAFFF). Residues 621 to 638 (FTHRIRIVQDTAPPLNYY) are Extracellular-facing. The chain crosses the membrane as a helical span at residues 639 to 659 (WVPILTVIVGSYLIAHGFFSV). Residues 660-711 (YGMCVDTLFLCFCEDLERNDGSQERPYFMSPELRDILLKGSAEEGKRAEAEE) lie on the Cytoplasmic side of the membrane.

Belongs to the CTL (choline transporter-like) family. In terms of assembly, interacts with COCH. In terms of processing, N-glycosylated.

Its subcellular location is the cell membrane. It is found in the mitochondrion outer membrane. The enzyme catalyses choline(out) + n H(+)(in) = choline(in) + n H(+)(out). It catalyses the reaction ethanolamine(out) + n H(+)(in) = ethanolamine(in) + n H(+)(out). Choline/H+ antiporter, mainly in mitochodria. Also acts as a low-affinity ethanolamine/H+ antiporter, regulating the supply of extracellular ethanolamine (Etn) for the CDP-Etn pathway, redistribute intracellular Etn and balance the CDP-Cho and CDP-Etn arms of the Kennedy pathway. This Pongo abelii (Sumatran orangutan) protein is Choline transporter-like protein 2 (SLC44A2).